The following is a 303-amino-acid chain: Olfactory receptor 4X2 (303 aa).

At 1–17 (MTEFIFLVLSPNQEVQR) the chain is on the extracellular side. A helical transmembrane segment spans residues 18–41 (VCFVIFLFLYTAIVLGNFLIVLTV). At 42-49 (MTSRSLGS) the chain is on the cytoplasmic side. Residues 50-71 (PMYFFLSYLSFMEICYSSATAP) form a helical membrane-spanning segment. The Extracellular segment spans residues 72–92 (KLISDLLAERKVISWWGCMAQ). An intrachain disulfide couples cysteine 89 to cysteine 181. A helical transmembrane segment spans residues 93 to 112 (LFFLHFFGGTEIFLLTVMAY). Residues 113–131 (DHYVAICKPLSYTTIMNWQ) are Cytoplasmic-facing. Residues 132–150 (VCTVLVGIAWVGGFMHSFA) form a helical membrane-spanning segment. At 151–187 (QILLIFHLLFCGPNVINHYFCDLVPLLKLACSDTFLI) the chain is on the extracellular side. A helical membrane pass occupies residues 188–211 (GLLIVANGGTLSVISFGVLLASYM). The Cytoplasmic portion of the chain corresponds to 212–227 (VILLHLRTWSSEGWCK). The helical transmembrane segment at 228–250 (ALSTCGSHFAVVILFFGPCVFNS) threads the bilayer. The Extracellular segment spans residues 251 to 261 (LRPSTTLPIDK). A helical transmembrane segment spans residues 262 to 281 (MVAVFYTVITAILNPVIYSL). The Cytoplasmic segment spans residues 282-303 (RNAEMRKAMKRLWIRTLRLNEK).

Belongs to the G-protein coupled receptor 1 family.

It localises to the cell membrane. Its function is as follows. Odorant receptor. The polypeptide is Olfactory receptor 4X2 (OR4X2) (Homo sapiens (Human)).